We begin with the raw amino-acid sequence, 442 residues long: tRNA modification GTPase MnmE (442 aa).

Residues Arg-23, Glu-82, and Lys-121 each coordinate (6S)-5-formyl-5,6,7,8-tetrahydrofolate. Residues 217–363 form the TrmE-type G domain; the sequence is PFKIAIIGET…LVDLLTKYIN (147 aa). Asn-227 serves as a coordination point for K(+). Residues 227–232, 246–252, and 271–274 contribute to the GTP site; these read NVGKSS, SNIKGST, and DTAG. Residue Ser-231 coordinates Mg(2+). K(+) contacts are provided by Ser-246, Ile-248, and Ser-251. Position 252 (Thr-252) interacts with Mg(2+). Lys-442 is a binding site for (6S)-5-formyl-5,6,7,8-tetrahydrofolate.

This sequence belongs to the TRAFAC class TrmE-Era-EngA-EngB-Septin-like GTPase superfamily. TrmE GTPase family. In terms of assembly, homodimer. Heterotetramer of two MnmE and two MnmG subunits. The cofactor is K(+).

It is found in the cytoplasm. In terms of biological role, exhibits a very high intrinsic GTPase hydrolysis rate. Involved in the addition of a carboxymethylaminomethyl (cmnm) group at the wobble position (U34) of certain tRNAs, forming tRNA-cmnm(5)s(2)U34. The chain is tRNA modification GTPase MnmE from Mycoplasma genitalium (strain ATCC 33530 / DSM 19775 / NCTC 10195 / G37) (Mycoplasmoides genitalium).